A 232-amino-acid chain; its full sequence is Orotidine 5'-phosphate decarboxylase (232 aa).

Substrate contacts are provided by residues Asp11, Lys32, 59-68 (DLKLHDIPHT), Thr116, Arg178, Gln188, Gly208, and Arg209. Lys61 (proton donor) is an active-site residue.

Belongs to the OMP decarboxylase family. Type 1 subfamily. In terms of assembly, homodimer.

The catalysed reaction is orotidine 5'-phosphate + H(+) = UMP + CO2. Its pathway is pyrimidine metabolism; UMP biosynthesis via de novo pathway; UMP from orotate: step 2/2. Catalyzes the decarboxylation of orotidine 5'-monophosphate (OMP) to uridine 5'-monophosphate (UMP). In Synechococcus sp. (strain JA-3-3Ab) (Cyanobacteria bacterium Yellowstone A-Prime), this protein is Orotidine 5'-phosphate decarboxylase.